Consider the following 33-residue polypeptide: Dermonecrotic toxin LiSicTox-alphaI-1 (33 aa).

E32 serves as a coordination point for Mg(2+).

It belongs to the arthropod phospholipase D family. Class II subfamily. Mg(2+) is required as a cofactor. Post-translationally, contains 2 disulfide bonds. In terms of tissue distribution, expressed by the venom gland.

Its subcellular location is the secreted. It carries out the reaction an N-(acyl)-sphingosylphosphocholine = an N-(acyl)-sphingosyl-1,3-cyclic phosphate + choline. The catalysed reaction is an N-(acyl)-sphingosylphosphoethanolamine = an N-(acyl)-sphingosyl-1,3-cyclic phosphate + ethanolamine. It catalyses the reaction a 1-acyl-sn-glycero-3-phosphocholine = a 1-acyl-sn-glycero-2,3-cyclic phosphate + choline. The enzyme catalyses a 1-acyl-sn-glycero-3-phosphoethanolamine = a 1-acyl-sn-glycero-2,3-cyclic phosphate + ethanolamine. Dermonecrotic toxins cleave the phosphodiester linkage between the phosphate and headgroup of certain phospholipids (sphingolipid and lysolipid substrates), forming an alcohol (often choline) and a cyclic phosphate. This toxin acts on sphingomyelin (SM). It may also act on ceramide phosphoethanolamine (CPE), lysophosphatidylcholine (LPC) and lysophosphatidylethanolamine (LPE), but not on lysophosphatidylserine (LPS), and lysophosphatidylglycerol (LPG). It acts by transphosphatidylation, releasing exclusively cyclic phosphate products as second products. In vivo, intradermal injection induces dermonecrosis. Induces hemolysis, increased vascular permeability, edema, inflammatory response, and platelet aggregation. This Loxosceles intermedia (Brown spider) protein is Dermonecrotic toxin LiSicTox-alphaI-1.